A 50-amino-acid chain; its full sequence is Large ribosomal subunit protein eL39 (50 aa).

Residues methionine 1 to leucine 12 show a composition bias toward basic residues. Residues methionine 1–arginine 21 form a disordered region.

This sequence belongs to the eukaryotic ribosomal protein eL39 family.

This is Large ribosomal subunit protein eL39 from Haloquadratum walsbyi (strain DSM 16790 / HBSQ001).